The primary structure comprises 83 residues: Non-muscle caldesmon (83 aa).

2 stretches are compositionally biased toward basic and acidic residues: residues 1–44 (QTSE…KEEK) and 62–76 (NQLK…KESK). Positions 1 to 63 (QTSEKEGRSE…PKPGSIEENQ (63 aa)) are myosin and calmodulin-binding. A disordered region spans residues 1–83 (QTSEKEGRSE…ESKNILSLCL (83 aa)).

Post-translationally, in non-muscle cells, phosphorylation by CDC2 during mitosis causes caldesmon to dissociate from microfilaments. Phosphorylation reduces caldesmon binding to actin, myosin, and calmodulin as well as its inhibition of actomyosin ATPase activity. Phosphorylation also occurs in both quiescent and dividing smooth muscle cells with similar effects on the interaction with actin and calmodulin and on microfilaments reorganization.

The protein resides in the cytoplasm. It localises to the cytoskeleton. The protein localises to the myofibril. Its subcellular location is the stress fiber. Functionally, actin- and myosin-binding protein implicated in the regulation of actomyosin interactions in smooth muscle and nonmuscle cells (could act as a bridge between myosin and actin filaments). Stimulates actin binding of tropomyosin which increases the stabilization of actin filament structure. In muscle tissues, inhibits the actomyosin ATPase by binding to F-actin. This inhibition is attenuated by calcium-calmodulin and is potentiated by tropomyosin. Interacts with actin, myosin, two molecules of tropomyosin and with calmodulin. Also plays an essential role during cellular mitosis and receptor capping. The chain is Non-muscle caldesmon (CALD1) from Bos taurus (Bovine).